The chain runs to 432 residues: Guanine nucleotide-binding protein subunit alpha (432 aa).

The interval 1-97 (MGGCMSTPEA…SKGNKDRSNQ (97 aa)) is disordered. The N-myristoyl glycine moiety is linked to residue Gly-2. Cys-4 carries S-palmitoyl cysteine lipidation. Low complexity predominate over residues 21–52 (PSTSTSSRPPQASTSATATAAGAGTSAANGTA). The 322-residue stretch at 111 to 432 (KECKILLLGS…QNALRDSGIL (322 aa)) folds into the G-alpha domain. Residues 114–127 (KILLLGSGESGKST) are G1 motif. GTP is bound by residues Glu-122, Ser-123, Gly-124, Lys-125, Ser-126, Thr-127, Asp-230, Leu-255, Thr-261, Gly-283, Asn-349, Lys-350, Asp-352, and Ala-404. Mg(2+) is bound at residue Ser-126. The segment at 253-261 (DVLRARTKT) is G2 motif. Residue Thr-261 participates in Mg(2+) binding. The G3 motif stretch occupies residues 276–285 (IHMFDVGGQR). Positions 345-352 (ILFLNKID) are G4 motif. The interval 402 to 407 (TQATDT) is G5 motif.

It belongs to the G-alpha family. G proteins are composed of 3 units; alpha, beta and gamma. The alpha chain contains the guanine nucleotide binding site. Mg(2+) serves as cofactor.

Guanine nucleotide-binding proteins (G proteins) are involved as modulators or transducers in various transmembrane signaling systems. Involved in the mating pathway. The polypeptide is Guanine nucleotide-binding protein subunit alpha (GPA1) (Cryptococcus neoformans var. neoformans serotype D (strain B-3501A) (Filobasidiella neoformans)).